The following is a 151-amino-acid chain: Ribosome maturation factor RimP (151 aa).

Belongs to the RimP family.

The protein resides in the cytoplasm. Functionally, required for maturation of 30S ribosomal subunits. In Colwellia psychrerythraea (strain 34H / ATCC BAA-681) (Vibrio psychroerythus), this protein is Ribosome maturation factor RimP.